The sequence spans 265 residues: Ubiquinone biosynthesis protein COQ4 homolog, mitochondrial (265 aa).

Residues 1-30 constitute a mitochondrion transit peptide; sequence MATLLRPVLRRLCGLPGLQRPAAEMPLRAR. Ser-108 carries the post-translational modification Phosphoserine. Positions 163, 164, 167, and 179 each coordinate Zn(2+).

Belongs to the COQ4 family. As to quaternary structure, component of a multi-subunit COQ enzyme complex, composed of at least COQ3, COQ4, COQ5, COQ6, COQ7 and COQ9. Zn(2+) serves as cofactor. As to expression, expressed ubiquitously, but at high levels in liver, lung and pancreas.

It localises to the mitochondrion inner membrane. It carries out the reaction 4-hydroxy-3-methoxy-5-(all-trans-decaprenyl)benzoate + H(+) = 2-methoxy-6-(all-trans-decaprenyl)phenol + CO2. Its pathway is cofactor biosynthesis; ubiquinone biosynthesis. Its function is as follows. Lyase that catalyzes the C1-decarboxylation of 4-hydroxy-3-methoxy-5-(all-trans-decaprenyl)benzoic acid into 2-methoxy-6-(all-trans-decaprenyl)phenol during ubiquinone biosynthesis. The polypeptide is Ubiquinone biosynthesis protein COQ4 homolog, mitochondrial (Homo sapiens (Human)).